The primary structure comprises 244 residues: Signal recognition particle receptor subunit beta (244 aa).

A helical membrane pass occupies residues isoleucine 7–valine 23. Residues glycine 45–serine 53, threonine 66–serine 69, glycine 90, and asparagine 154–glutamate 157 contribute to the GTP site.

It belongs to the SRP receptor beta subunit family. Heterodimer of an alpha and a beta chain.

It localises to the endoplasmic reticulum membrane. In terms of biological role, component of the signal recognition particle (SRP) complex receptor (SR). Ensures, in conjunction with the SRP complex, the correct targeting of the nascent secretory proteins to the endoplasmic reticulum membrane system. May mediate the membrane association of SR. In Saccharomyces cerevisiae (strain ATCC 204508 / S288c) (Baker's yeast), this protein is Signal recognition particle receptor subunit beta (SRP102).